A 724-amino-acid chain; its full sequence is Phenylalanine ammonia-lyase (724 aa).

Tyr99 functions as the Proton donor/acceptor in the catalytic mechanism. The 5-imidazolinone (Ala-Gly) cross-link spans Ala204–Gly206. Position 205 is a 2,3-didehydroalanine (Ser) (Ser205). 7 residues coordinate (E)-cinnamate: Asn265, Gln355, Arg361, Asn391, Lys462, Glu490, and Asn493.

Belongs to the PAL/histidase family. Homotetramer. In terms of processing, contains an active site 4-methylidene-imidazol-5-one (MIO), which is formed autocatalytically by cyclization and dehydration of residues Ala-Ser-Gly.

It is found in the cytoplasm. The catalysed reaction is L-phenylalanine = (E)-cinnamate + NH4(+). It participates in phenylpropanoid metabolism; trans-cinnamate biosynthesis; trans-cinnamate from L-phenylalanine: step 1/1. Catalyzes the non-oxidative deamination of L-phenylalanine to form trans-cinnamic acid and a free ammonium ion. Facilitates the commitment step in phenylpropanoid pathways that produce secondary metabolites such as lignins, coumarins and flavonoids. This Flammulina velutipes (Agaricus velutipes) protein is Phenylalanine ammonia-lyase.